The following is a 315-amino-acid chain: Methionyl-tRNA formyltransferase (315 aa).

110-113 (SLLP) contributes to the (6S)-5,6,7,8-tetrahydrofolate binding site.

Belongs to the Fmt family.

The enzyme catalyses L-methionyl-tRNA(fMet) + (6R)-10-formyltetrahydrofolate = N-formyl-L-methionyl-tRNA(fMet) + (6S)-5,6,7,8-tetrahydrofolate + H(+). In terms of biological role, attaches a formyl group to the free amino group of methionyl-tRNA(fMet). The formyl group appears to play a dual role in the initiator identity of N-formylmethionyl-tRNA by promoting its recognition by IF2 and preventing the misappropriation of this tRNA by the elongation apparatus. This Lactobacillus delbrueckii subsp. bulgaricus (strain ATCC BAA-365 / Lb-18) protein is Methionyl-tRNA formyltransferase.